Here is a 509-residue protein sequence, read N- to C-terminus: Monofunctional riboflavin biosynthesis protein RIBA 3, chloroplastic (509 aa).

Residues 1–43 constitute a chloroplast transit peptide; sequence MMDSALYHPRIFFAHSFINGLYSSPRFANTCWRLVSRSSWEIK. The segment at 44–302 is inactive DHBP synthase; it reads ASENSDRNVF…LTDLIRYRRK (259 aa). D-ribulose 5-phosphate is bound by residues 125-126 and 240-244; these read GD and RAGHT. A GTP cyclohydrolase II region spans residues 303 to 509; that stretch reads RDKLVERITV…ISDNNDQPLA (207 aa). 353–357 is a binding site for GTP; it reads RVHSE. Zn(2+)-binding residues include Cys358, Cys369, and Cys371. GTP-binding positions include Gln374, 397-399, and Thr419; that span reads EGR. The active-site Proton acceptor; for GTP cyclohydrolase activity is Asp431. Catalysis depends on Arg433, which acts as the Nucleophile; for GTP cyclohydrolase activity. The GTP site is built by Thr454 and Lys459.

It in the N-terminal section; belongs to the DHBP synthase family. The protein in the C-terminal section; belongs to the GTP cyclohydrolase II family. It depends on Zn(2+) as a cofactor. Expressed in leaves, shoots, roots, flowers and siliques.

The protein resides in the plastid. It localises to the chloroplast. It catalyses the reaction GTP + 4 H2O = 2,5-diamino-6-hydroxy-4-(5-phosphoribosylamino)-pyrimidine + formate + 2 phosphate + 3 H(+). The protein operates within cofactor biosynthesis; riboflavin biosynthesis; 5-amino-6-(D-ribitylamino)uracil from GTP: step 1/4. In terms of biological role, involved in riboflavin biosynthesis. Catalyzes the conversion of GTP to 2,5-diamino-6-ribosylamino-4(3H)-pyrimidinone 5'-phosphate (DARP), formate and pyrophosphate. RIBA2 and RIBA3 together are not able to complement the loss of function of RIBA1. In Arabidopsis thaliana (Mouse-ear cress), this protein is Monofunctional riboflavin biosynthesis protein RIBA 3, chloroplastic (RIBA3).